The sequence spans 1306 residues: Contactin-associated protein-like 5 (1306 aa).

A signal peptide spans 1–24 (MDSLPRLTSVLTLLFSGLWHLGLT). The Extracellular segment spans residues 25-1237 (ATNYNCDDPL…PLTNAVRSDS (1213 aa)). The 145-residue stretch at 30-174 (CDDPLASLLS…IGMRVEVYGC (145 aa)) folds into the F5/8 type C domain. A disulfide bridge links cysteine 30 with cysteine 174. Laminin G-like domains are found at residues 180-360 (VADF…TFSC) and 367-544 (PITF…IDLC). N-linked (GlcNAc...) asparagine glycans are attached at residues asparagine 282, asparagine 355, and asparagine 496. Cysteine 329 and cysteine 360 are disulfide-bonded. Intrachain disulfides connect cysteine 512–cysteine 544, cysteine 550–cysteine 561, and cysteine 555–cysteine 570. One can recognise an EGF-like 1 domain in the interval 546-583 (IKDRCLPNYCEHGGSCSQSWTTFYCNCSDTSYTGATCH). Asparagine 571 is a glycosylation site (N-linked (GlcNAc...) asparagine). Cysteines 572 and 582 form a disulfide. A Fibrinogen C-terminal domain is found at 584–790 (NSIYEQSCEV…LRCYGDRRFW (207 aa)). A glycan (N-linked (GlcNAc...) asparagine) is linked at asparagine 622. One can recognise a Laminin G-like 3 domain in the interval 791–956 (NAVSFYTEAS…KVTSGVRPGC (166 aa)). 5 cysteine pairs are disulfide-bonded: cysteine 929/cysteine 956, cysteine 960/cysteine 973, cysteine 967/cysteine 982, cysteine 984/cysteine 994, and cysteine 1164/cysteine 1199. One can recognise an EGF-like 2 domain in the interval 957–995 (PGHCSSYGSICHNGGKCVEKHNGYLCDCTNSPYEGPFCK). A Laminin G-like 4 domain is found at 1013 to 1199 (QEPYPVTKNI…VHGTLTESSC (187 aa)). A helical transmembrane segment spans residues 1238–1258 (AVIGGVIAVVIFIIFCIIGIM). At 1259–1306 (TRFLYQHKQSHRTSQMKEKEYPENLDSSFRNEIDLQNTVSECKREYFI) the chain is on the cytoplasmic side.

The protein belongs to the neurexin family.

The protein localises to the membrane. Functionally, may play a role in the correct development and proper functioning of the peripheral and central nervous system and be involved in cell adhesion and intercellular communication. This Homo sapiens (Human) protein is Contactin-associated protein-like 5 (CNTNAP5).